The sequence spans 345 residues: Arginine-hydroxylase NDUFAF5, mitochondrial (345 aa).

A mitochondrion-targeting transit peptide spans 1 to 36; sequence MLRPAGLWRLCRRPWAARVPAENLGRREVTSGVSPR.

This sequence belongs to the methyltransferase superfamily. Interacts with NDUFAF8, leading to stabilize NDUFAF5. Interacts with NDUFS7. Interacts with PYURF (via TRM112 domain); the interaction is direct and stabilizes NDUFAF5 protein.

It localises to the mitochondrion inner membrane. Functionally, arginine hydroxylase that mediates hydroxylation of 'Arg-111' of NDUFS7 and is involved in the assembly of mitochondrial NADH:ubiquinone oxidoreductase complex (complex I, MT-ND1) at early stages. May also have methyltransferase activity. In Homo sapiens (Human), this protein is Arginine-hydroxylase NDUFAF5, mitochondrial.